A 578-amino-acid polypeptide reads, in one-letter code: Peptidyl-prolyl cis-trans isomerase-like 2 (578 aa).

Residues 40-114 (RRLPFNFCAA…SDSLGAGLSD (75 aa)) form the U-box domain. The segment at 240–260 (KAREQGGDVNRSSTALTKPTG) is disordered. Residues 321 to 475 (ATGFARMETN…NKILIKDIVI (155 aa)) form the PPIase cyclophilin-type domain. Positions 505–578 (GTDDDKTTWT…GGGFGNFDNW (74 aa)) are disordered. The span at 538–548 (KTTTQQSTPTV) shows a compositional bias: polar residues. The segment covering 551-560 (ADLEDVDTWE) has biased composition (acidic residues). Gly residues predominate over residues 569-578 (GGGFGNFDNW).

It belongs to the cyclophilin-type PPIase family. PPIL2 subfamily.

The protein localises to the nucleus. It catalyses the reaction [protein]-peptidylproline (omega=180) = [protein]-peptidylproline (omega=0). It carries out the reaction S-ubiquitinyl-[E2 ubiquitin-conjugating enzyme]-L-cysteine + [acceptor protein]-L-lysine = [E2 ubiquitin-conjugating enzyme]-L-cysteine + N(6)-ubiquitinyl-[acceptor protein]-L-lysine.. Its pathway is protein modification; protein ubiquitination. In terms of biological role, may catalyze the cis-trans isomerization of proline imidic peptide bonds in oligopeptides thereby assisting the folding of proteins. May also function as a chaperone, playing a role in intracellular transport of proteins. May also have a protein ubiquitin ligase activity acting as an E3 ubiquitin protein ligase or as a ubiquitin-ubiquitin ligase promoting elongation of ubiquitin chains on proteins. In Gibberella zeae (strain ATCC MYA-4620 / CBS 123657 / FGSC 9075 / NRRL 31084 / PH-1) (Wheat head blight fungus), this protein is Peptidyl-prolyl cis-trans isomerase-like 2 (CYP8).